We begin with the raw amino-acid sequence, 198 residues long: Small ribosomal subunit protein uS7 (198 aa).

Belongs to the universal ribosomal protein uS7 family. In terms of assembly, part of the 30S ribosomal subunit.

Its function is as follows. One of the primary rRNA binding proteins, it binds directly to 16S rRNA where it nucleates assembly of the head domain of the 30S subunit. Is located at the subunit interface close to the decoding center. This is Small ribosomal subunit protein uS7 from Nanoarchaeum equitans (strain Kin4-M).